Reading from the N-terminus, the 417-residue chain is Multifunctional CCA protein (417 aa).

ATP-binding residues include G8 and R11. CTP is bound by residues G8 and R11. Mg(2+) is bound by residues D21 and D23. ATP-binding residues include R91, R137, and R140. Positions 91, 137, and 140 each coordinate CTP. An HD domain is found at 225–326 (SGIHTLMTLQ…LNVLKKTDAF (102 aa)).

It belongs to the tRNA nucleotidyltransferase/poly(A) polymerase family. Bacterial CCA-adding enzyme type 1 subfamily. Monomer. Can also form homodimers and oligomers. It depends on Mg(2+) as a cofactor. Ni(2+) serves as cofactor.

The catalysed reaction is a tRNA precursor + 2 CTP + ATP = a tRNA with a 3' CCA end + 3 diphosphate. The enzyme catalyses a tRNA with a 3' CCA end + 2 CTP + ATP = a tRNA with a 3' CCACCA end + 3 diphosphate. In terms of biological role, catalyzes the addition and repair of the essential 3'-terminal CCA sequence in tRNAs without using a nucleic acid template. Adds these three nucleotides in the order of C, C, and A to the tRNA nucleotide-73, using CTP and ATP as substrates and producing inorganic pyrophosphate. tRNA 3'-terminal CCA addition is required both for tRNA processing and repair. Also involved in tRNA surveillance by mediating tandem CCA addition to generate a CCACCA at the 3' terminus of unstable tRNAs. While stable tRNAs receive only 3'-terminal CCA, unstable tRNAs are marked with CCACCA and rapidly degraded. The sequence is that of Multifunctional CCA protein from Neisseria meningitidis serogroup C / serotype 2a (strain ATCC 700532 / DSM 15464 / FAM18).